Reading from the N-terminus, the 159-residue chain is NADH-quinone oxidoreductase subunit I (159 aa).

4Fe-4S ferredoxin-type domains follow at residues Arg-51–Asp-80 and Thr-90–Asn-119. [4Fe-4S] cluster is bound by residues Cys-60, Cys-63, Cys-66, Cys-70, Cys-99, Cys-102, Cys-105, and Cys-109.

It belongs to the complex I 23 kDa subunit family. NDH-1 is composed of 14 different subunits. Subunits NuoA, H, J, K, L, M, N constitute the membrane sector of the complex. Requires [4Fe-4S] cluster as cofactor.

The protein localises to the cell membrane. It carries out the reaction a quinone + NADH + 5 H(+)(in) = a quinol + NAD(+) + 4 H(+)(out). NDH-1 shuttles electrons from NADH, via FMN and iron-sulfur (Fe-S) centers, to quinones in the respiratory chain. The immediate electron acceptor for the enzyme in this species is believed to be ubiquinone. Couples the redox reaction to proton translocation (for every two electrons transferred, four hydrogen ions are translocated across the cytoplasmic membrane), and thus conserves the redox energy in a proton gradient. The polypeptide is NADH-quinone oxidoreductase subunit I (Rickettsia africae (strain ESF-5)).